Reading from the N-terminus, the 371-residue chain is Cell division control protein 3 (371 aa).

In terms of domain architecture, Septin-type G spans 22–307 (AGIDFNIMTV…DEYKTREIGL (286 aa)). The G1 motif stretch occupies residues 32-39 (GSNGLGKS). Residues 32 to 39 (GSNGLGKS), Gly116, 195 to 203 (KSDLLSDSE), and Arg257 each bind GTP. Residues 113–116 (EVDG) are G3 motif. A G4 motif region spans residues 194-197 (GKSD).

It belongs to the TRAFAC class TrmE-Era-EngA-EngB-Septin-like GTPase superfamily. Septin GTPase family. In terms of assembly, component of the septin complex.

Functionally, septins are GTPases involved in cytokinesis. The septins localize to the site of cleavage and act as a structural scaffold that recruits different components involved in diverse processes at specific stages during the cell cycle. Septins are also involved in cell morphogenesis, chitin deposition, cell cycle regulation, cell compartmentalization and spore wall formation. In Encephalitozoon cuniculi (strain GB-M1) (Microsporidian parasite), this protein is Cell division control protein 3 (CDC3).